Here is a 198-residue protein sequence, read N- to C-terminus: ATP-dependent Clp protease proteolytic subunit 1 (198 aa).

Ser-96 serves as the catalytic Nucleophile. His-121 is a catalytic residue.

This sequence belongs to the peptidase S14 family. In terms of assembly, fourteen ClpP subunits assemble into 2 heptameric rings which stack back to back to give a disk-like structure with a central cavity, resembling the structure of eukaryotic proteasomes.

It is found in the cytoplasm. The enzyme catalyses Hydrolysis of proteins to small peptides in the presence of ATP and magnesium. alpha-casein is the usual test substrate. In the absence of ATP, only oligopeptides shorter than five residues are hydrolyzed (such as succinyl-Leu-Tyr-|-NHMec, and Leu-Tyr-Leu-|-Tyr-Trp, in which cleavage of the -Tyr-|-Leu- and -Tyr-|-Trp bonds also occurs).. Functionally, cleaves peptides in various proteins in a process that requires ATP hydrolysis. Has a chymotrypsin-like activity. Plays a major role in the degradation of misfolded proteins. This is ATP-dependent Clp protease proteolytic subunit 1 from Synechocystis sp. (strain ATCC 27184 / PCC 6803 / Kazusa).